The following is a 319-amino-acid chain: NADH-cytochrome b5 reductase 2 (319 aa).

A helical transmembrane segment spans residues 30-46; sequence LAPVYLTVGLAGLGVGL. The FAD-binding FR-type domain occupies 69–173; it reads QGWVDLKLSE…KGPLPKYPWE (105 aa). 176–211 serves as a coordination point for FAD; it reads KHQHICLIAGGTGITPMYQLARHIFKNPEDKTKVTL.

Belongs to the flavoprotein pyridine nucleotide cytochrome reductase family. It depends on FAD as a cofactor.

The protein resides in the mitochondrion outer membrane. The catalysed reaction is 2 Fe(III)-[cytochrome b5] + NADH = 2 Fe(II)-[cytochrome b5] + NAD(+) + H(+). May mediate the reduction of outer membrane cytochrome b5. In Aspergillus terreus (strain NIH 2624 / FGSC A1156), this protein is NADH-cytochrome b5 reductase 2 (mcr1).